The primary structure comprises 799 residues: ATP synthase subunit alpha (799 aa).

The segment at 1-549 (MTDNKNHSLI…EEVSLKPTTE (549 aa)) is ATP synthase alpha chain. 170-177 (GDRQTGKT) is a binding site for ATP. Residues 550 to 799 (TSEAVQIEEK…KGPSGFTYLK (250 aa)) are unknown.

It belongs to the ATPase alpha/beta chains family. In terms of assembly, F-type ATPases have 2 components, CF(1) - the catalytic core - and CF(0) - the membrane proton channel. CF(1) has five subunits: alpha(3), beta(3), gamma(1), delta(1), epsilon(1). CF(0) has three main subunits: a(1), b(2) and c(9-12). The alpha and beta chains form an alternating ring which encloses part of the gamma chain. CF(1) is attached to CF(0) by a central stalk formed by the gamma and epsilon chains, while a peripheral stalk is formed by the delta and b chains.

Its subcellular location is the cell membrane. The enzyme catalyses ATP + H2O + 4 H(+)(in) = ADP + phosphate + 5 H(+)(out). Functionally, produces ATP from ADP in the presence of a proton gradient across the membrane. The alpha chain is a regulatory subunit. The polypeptide is ATP synthase subunit alpha (atpA) (Ureaplasma parvum serovar 3 (strain ATCC 27815 / 27 / NCTC 11736)).